Consider the following 817-residue polypeptide: Putative ATP-dependent RNA helicase R350 (817 aa).

The interval 1 to 29 (MNRRNRSNDLNPEPSIENPNNQIAEEFPG) is disordered. Positions 17–29 (ENPNNQIAEEFPG) are enriched in polar residues. Residues 93 to 271 (LNPQGPYTSI…ALMFNLLRPG (179 aa)) form the Helicase ATP-binding domain. ATP is bound at residue 106 to 113 (HGLGSGKT). Residues 206 to 209 (DEAH) carry the DEAH box motif. In terms of domain architecture, Helicase C-terminal spans 495-661 (LAIAFMTYIS…STDEYVEDQA (167 aa)).

It belongs to the DEAD box helicase family. DEAH subfamily.

The protein resides in the virion. It catalyses the reaction ATP + H2O = ADP + phosphate + H(+). This Acanthamoeba polyphaga mimivirus (APMV) protein is Putative ATP-dependent RNA helicase R350.